The primary structure comprises 427 residues: Mitochondrial fission protein ELM1 (427 aa).

Interacts with DRP3 and DRP3B.

Its subcellular location is the mitochondrion outer membrane. Functionally, plant-specific factor involved in mitochondria fission. Is required for the correct localization of DRP3A from the cytosol to mitochondrial fission sites. Does not seem to be required for peroxisomal division. The protein is Mitochondrial fission protein ELM1 (ELM1) of Arabidopsis thaliana (Mouse-ear cress).